A 319-amino-acid chain; its full sequence is Acetaldehyde dehydrogenase 1 (319 aa).

The active-site Acyl-thioester intermediate is the Cys-129. Residues 160–168 (SAGPGTRAN) and Asn-287 each bind NAD(+).

It belongs to the acetaldehyde dehydrogenase family.

It catalyses the reaction acetaldehyde + NAD(+) + CoA = acetyl-CoA + NADH + H(+). This is Acetaldehyde dehydrogenase 1 from Burkholderia lata (strain ATCC 17760 / DSM 23089 / LMG 22485 / NCIMB 9086 / R18194 / 383).